Here is a 914-residue protein sequence, read N- to C-terminus: Protein ECT2 (914 aa).

Ala2 carries the post-translational modification N-acetylalanine. BRCT domains lie at 171–260 and 266–354; these read LYCT…AAVD and FKVP…MYLY. Thr359 carries the post-translational modification Phosphothreonine; by PKC/PRKCI. Residues Ser367 and Ser370 each carry the phosphoserine modification. Thr373 is modified (phosphothreonine; by CDK1). A Phosphoserine modification is found at Ser376. 2 consecutive short sequence motifs (nuclear localization signal) follow at residues 378–382 and 401–405; these read RKRRR and PRKRP. The tract at residues 388–449 is disordered; it reads AQLSRETDVS…SKSSTPVPSK (62 aa). Positions 418 to 429 are enriched in polar residues; that stretch reads DISNTPESSINY. The segment covering 432–449 has biased composition (low complexity); sequence TPKSCTKSSKSSTPVPSK. Position 444 is a phosphothreonine; by CDK1 (Thr444). In terms of domain architecture, DH spans 452–641; it reads ARWQVAKELY…KEVMTHINED (190 aa). Residue Lys611 forms a Glycyl lysine isopeptide (Lys-Gly) (interchain with G-Cter in SUMO2) linkage. Residues 675–794 enclose the PH domain; the sequence is RVETISLGEH…KMLCRHVANT (120 aa). Phosphoserine occurs at positions 716 and 842. Position 846 is a phosphothreonine; by CDK1 (Thr846). The tract at residues 857–884 is disordered; that stretch reads TSHGSVEGRSPSSNDKHVMSRLSSTSSL. Phosphoserine occurs at positions 861 and 866.

Homodimer. Homooligomer. Found in the centralspindlin complex. Interacts with NR1I3. Interacts (Thr-359 phosphorylated form) with PARD6A; the interaction is observed in cancer cells. Interacts (Thr-359 phosphorylated form) with PRKCI; the interaction is observed in cancer cells. Interacts with PKP4; the interaction is observed at the midbody. Interacts with RACGAP1/CYK4; the interaction is direct, occurs in a microtubule-dependent manner, occurs at anaphase and during cytokinesis, is inhibited in metaphase by phosphorylation of ECT2 on Thr-373 and is stimulated in early anaphase by dephosphorylation of ECT2 probably on Thr-373 through CDK1 activity. Interacts with PLK1; the interaction is stimulated upon its phosphorylation on Thr-444. Interacts with RHOA; the interaction results in allosteric activation of ECT2. Interacts with KIF23, PARD3, PARD6B and PRKCQ. Interacts with NEDD9/HEF1. Post-translationally, phosphorylated by PLK1 in vitro. Hyperphosphorylated during the G2 phase of the cell cycle. Phosphorylation at Thr-373 occurs during the G2/M phase, relieves its auto-inhibition status and stimulates its GEF activity. Phosphorylation at Thr-444 in G2/M phase is required for subsequent binding with PLK1 and Rho exchange activation. Dephosphorylated at the time of cytokinesis. Phosphorylation at Thr-359 is required for its transformation activity in cancer cells. In terms of tissue distribution, expressed in lung epithelial cells (at protein level). Expressed in squamous cell carcinoma, primary non-small cell lung cancer tumors and lung adenocarcinoma.

The protein resides in the nucleus. It is found in the cytoplasm. Its subcellular location is the cytoskeleton. The protein localises to the spindle. It localises to the cleavage furrow. The protein resides in the midbody. It is found in the cell junction. Its subcellular location is the tight junction. The protein localises to the microtubule organizing center. It localises to the centrosome. Autoinhibited by the C-terminal PH domain which folds back and binds to the surface of the DH domain, blocking binding of RHOA to the catalytic center of the DH domain. The 2nd BRCT domain is also involved in inhibition, probably by helping to impede RHOA binding. Allosterically activated by binding of activated GTP-bound RHOA to the PH domain which stimulates the release of PH inhibition and promotes the binding of substrate RHOA to the catalytic center. Binding of phosphorylated RACGAP1 to the N-terminal BRCT domain-containing region also releases autoinhibition. In terms of biological role, guanine nucleotide exchange factor (GEF) that catalyzes the exchange of GDP for GTP. Promotes guanine nucleotide exchange on the Rho family members of small GTPases, like RHOA, RHOC, RAC1 and CDC42. Required for signal transduction pathways involved in the regulation of cytokinesis. Component of the centralspindlin complex that serves as a microtubule-dependent and Rho-mediated signaling required for the myosin contractile ring formation during the cell cycle cytokinesis. Regulates the translocation of RHOA from the central spindle to the equatorial region. Plays a role in the control of mitotic spindle assembly; regulates the activation of CDC42 in metaphase for the process of spindle fibers attachment to kinetochores before chromosome congression. Involved in the regulation of epithelial cell polarity; participates in the formation of epithelial tight junctions in a polarity complex PARD3-PARD6-protein kinase PRKCQ-dependent manner. Plays a role in the regulation of neurite outgrowth. Inhibits phenobarbital (PB)-induced NR1I3 nuclear translocation. Stimulates the activity of RAC1 through its association with the oncogenic PARD6A-PRKCI complex in cancer cells, thereby acting to coordinately drive tumor cell proliferation and invasion. Also stimulates genotoxic stress-induced RHOB activity in breast cancer cells leading to their cell death. This chain is Protein ECT2, found in Homo sapiens (Human).